Here is a 135-residue protein sequence, read N- to C-terminus: uncharacterized protein (135 aa).

Residues 13–129 enclose the Response regulatory domain; that stretch reads QVLIAENSRF…KILEKVNAAI (117 aa). The residue at position 64 (aspartate 64) is a 4-aspartylphosphate.

This is an uncharacterized protein from Leptospira interrogans serogroup Icterohaemorrhagiae serovar copenhageni (strain Fiocruz L1-130).